The following is a 314-amino-acid chain: MNTYVAEIGEIVRSQRRDEEYIEDITERLSRVSKELLGQRTWIRWFPYLKSIASTLYYTSTVVLGNQTLGEEYVHLFESNGLERTVPSIPSRISFVLLHSAFPLISNYLIQKAESTLTHPSTESFLGIPIRKNQKARQSFLDVFFWLRTKLFPQLQRAHIALFYITGAYYSIARRFTGIRFLSASAHSDIPALKVYRFLGYITLIQLAVSIGISLYSFLEQEKFNNKLKKEKKENNGGSDRNLDENSLFHPTFQCSICLENKNPSALFCGHLFCWTCIQEHAVAATSSASTSSARCPQCRLEFQPRDVTPLLNL.

Over 1-7 (MNTYVAE) the chain is Peroxisomal matrix. Residues 8-37 (IGEIVRSQRRDEEYIEDITERLSRVSKELL) traverse the membrane as a helical segment. A topological domain (cytoplasmic) is located at residue glycine 38. Residues 39–60 (QRTWIRWFPYLKSIASTLYYTS) traverse the membrane as a helical segment. Residues 61-90 (TVVLGNQTLGEEYVHLFESNGLERTVPSIP) lie on the Peroxisomal matrix side of the membrane. Residues 91–110 (SRISFVLLHSAFPLISNYLI) form a helical membrane-spanning segment. Residues 111–142 (QKAESTLTHPSTESFLGIPIRKNQKARQSFLD) lie on the Cytoplasmic side of the membrane. The helical transmembrane segment at 143 to 166 (VFFWLRTKLFPQLQRAHIALFYIT) threads the bilayer. Over 167-197 (GAYYSIARRFTGIRFLSASAHSDIPALKVYR) the chain is Peroxisomal matrix. The helical transmembrane segment at 198–218 (FLGYITLIQLAVSIGISLYSF) threads the bilayer. The Cytoplasmic portion of the chain corresponds to 219 to 314 (LEQEKFNNKL…PRDVTPLLNL (96 aa)). The Zn(2+) site is built by cysteine 255, cysteine 258, cysteine 269, histidine 271, cysteine 274, cysteine 277, cysteine 296, and cysteine 299. The RING-type zinc-finger motif lies at 255 to 300 (CSICLENKNPSALFCGHLFCWTCIQEHAVAATSSASTSSARCPQCR).

This sequence belongs to the pex2/pex10/pex12 family. Component of the PEX2-PEX10-PEX12 retrotranslocation channel.

It localises to the peroxisome membrane. The enzyme catalyses S-ubiquitinyl-[E2 ubiquitin-conjugating enzyme]-L-cysteine + [acceptor protein]-L-lysine = [E2 ubiquitin-conjugating enzyme]-L-cysteine + N(6)-ubiquitinyl-[acceptor protein]-L-lysine.. It participates in protein modification; protein ubiquitination. With respect to regulation, the E3 ubiquitin-protein ligase activity is stimulated by PEX12/prx-12. Functionally, E3 ubiquitin-protein ligase component of a retrotranslocation channel required for peroxisome organization by mediating export of the PEX5/prx-5 receptor from peroxisomes to the cytosol, thereby promoting PEX5/prx-5 recycling. The retrotranslocation channel is composed of PEX2/prx-2, PEX10/prx-10 and PEX12/prx-12; each subunit contributing transmembrane segments that coassemble into an open channel that specifically allows the passage of PEX5/prx-5 through the peroxisomal membrane. PEX10/prx-10 also regulates PEX5 recycling by acting as a E3 ubiquitin-protein ligase. When PEX5/prx-5 recycling is compromised, PEX10/prx-10 catalyzes polyubiquitination of PEX5/prx-5 during its passage through the retrotranslocation channel, leading to its degradation. This is Peroxisome biogenesis factor 10 from Caenorhabditis elegans.